We begin with the raw amino-acid sequence, 200 residues long: Ras-related protein Rab5 (200 aa).

GTP-binding positions include 17–25 (GDMGAGKSS), 36–42 (LEFQEST), 65–69 (DTAGQ), 123–126 (NKAD), and 153–155 (SAK). The Effector region motif lies at 39-47 (QESTIGAAF). S-geranylgeranyl cysteine attachment occurs at residues Cys-198 and Cys-199.

This sequence belongs to the small GTPase superfamily. Rab family. In terms of tissue distribution, virtually not expressed in leaves, higher in stems and roots, and highest in flowers.

Its subcellular location is the cell membrane. In terms of biological role, protein transport. Probably involved in vesicular traffic. In Nicotiana tabacum (Common tobacco), this protein is Ras-related protein Rab5 (RAB5).